A 187-amino-acid polypeptide reads, in one-letter code: Threonylcarbamoyl-AMP synthase (187 aa).

In terms of domain architecture, YrdC-like spans 4-187 (TLTLSEAVTA…DARSGHILRL (184 aa)).

Belongs to the SUA5 family. TsaC subfamily.

The protein localises to the cytoplasm. It catalyses the reaction L-threonine + hydrogencarbonate + ATP = L-threonylcarbamoyladenylate + diphosphate + H2O. Its function is as follows. Required for the formation of a threonylcarbamoyl group on adenosine at position 37 (t(6)A37) in tRNAs that read codons beginning with adenine. Catalyzes the conversion of L-threonine, HCO(3)(-)/CO(2) and ATP to give threonylcarbamoyl-AMP (TC-AMP) as the acyladenylate intermediate, with the release of diphosphate. The chain is Threonylcarbamoyl-AMP synthase from Xylella fastidiosa (strain 9a5c).